The chain runs to 50 residues: Cytochrome c-555 (50 aa).

C7, C10, H11, and M25 together coordinate heme.

In terms of processing, binds 1 heme group per subunit.

It localises to the cell membrane. The chain is Cytochrome c-555 from Schinkia azotoformans (Bacillus azotoformans).